Consider the following 344-residue polypeptide: Mitochondrial mRNA pseudouridine synthase Rpusd3 (344 aa).

The N-terminal 36 residues, 1–36 (MGALRVLRYVSMIWRPELGSCARQRDAGFGTEARRP), are a transit peptide targeting the mitochondrion. The disordered stretch occupies residues 25–53 (RDAGFGTEARRPSQPHRSSKHKDLVEDQP).

The protein belongs to the pseudouridine synthase RluA family. Forms a regulatory protein-RNA complex, consisting of RCC1L, NGRN, RPUSD3, RPUSD4, TRUB2, FASTKD2 and 16S mt-rRNA.

The protein localises to the mitochondrion matrix. The enzyme catalyses a uridine in mRNA = a pseudouridine in mRNA. Its function is as follows. Catalyzes uridine to pseudouridine isomerization (pseudouridylation) of specific mitochondrial mRNAs (mt-mRNAs), a post-transcriptional modification necessary for their translation. Acts at position 390 in COXI mt-mRNA and at position 697-699 in mitochondrial COXIII mt-mRNA. As a component of a functional protein-RNA module, consisting of RCC1L, NGRN, RPUSD3, RPUSD4, TRUB2, FASTKD2 and 16S mitochondrial ribosomal RNA (16S mt-rRNA), controls 16S mt-rRNA abundance and may play a role in mitochondrial ribosome biogenesis. The protein is Mitochondrial mRNA pseudouridine synthase Rpusd3 (Rpusd3) of Mus musculus (Mouse).